The following is a 319-amino-acid chain: tRNA-cytidine(32) 2-sulfurtransferase (319 aa).

Positions 43-48 (SGGKDS) match the PP-loop motif motif. [4Fe-4S] cluster contacts are provided by C118, C121, and C209.

The protein belongs to the TtcA family. In terms of assembly, homodimer. The cofactor is Mg(2+). [4Fe-4S] cluster serves as cofactor.

The protein localises to the cytoplasm. It carries out the reaction cytidine(32) in tRNA + S-sulfanyl-L-cysteinyl-[cysteine desulfurase] + AH2 + ATP = 2-thiocytidine(32) in tRNA + L-cysteinyl-[cysteine desulfurase] + A + AMP + diphosphate + H(+). It functions in the pathway tRNA modification. Its function is as follows. Catalyzes the ATP-dependent 2-thiolation of cytidine in position 32 of tRNA, to form 2-thiocytidine (s(2)C32). The sulfur atoms are provided by the cysteine/cysteine desulfurase (IscS) system. This Neisseria gonorrhoeae (strain NCCP11945) protein is tRNA-cytidine(32) 2-sulfurtransferase.